We begin with the raw amino-acid sequence, 140 residues long: 3-hydroxyacyl-[acyl-carrier-protein] dehydratase FabZ (140 aa).

H48 is an active-site residue.

The protein belongs to the thioester dehydratase family. FabZ subfamily.

The protein resides in the cytoplasm. It catalyses the reaction a (3R)-hydroxyacyl-[ACP] = a (2E)-enoyl-[ACP] + H2O. Functionally, involved in unsaturated fatty acids biosynthesis. Catalyzes the dehydration of short chain beta-hydroxyacyl-ACPs and long chain saturated and unsaturated beta-hydroxyacyl-ACPs. The protein is 3-hydroxyacyl-[acyl-carrier-protein] dehydratase FabZ of Exiguobacterium sibiricum (strain DSM 17290 / CCUG 55495 / CIP 109462 / JCM 13490 / 255-15).